A 238-amino-acid chain; its full sequence is Mannose-binding protein A (238 aa).

Positions 1 to 17 (MLLLPLLVLLCVVSVSS) are cleaved as a signal peptide. Residues 38 to 49 (DGRDGPKGEKGE) show a composition bias toward basic and acidic residues. The tract at residues 38 to 87 (DGRDGPKGEKGEPGQGLRGLQGPPGKLGPPGSVGAPGSQGPKGQKGDRGD) is disordered. The 50-residue stretch at 39 to 88 (GRDGPKGEKGEPGQGLRGLQGPPGKLGPPGSVGAPGSQGPKGQKGDRGDS) folds into the Collagen-like domain. P43 bears the 4-hydroxyproline mark. 5-hydroxylysine occurs at positions 44 and 47. O-linked (Gal...) hydroxylysine glycans are attached at residues K44 and K47. 5 positions are modified to 4-hydroxyproline: P50, P61, P67, P73, and P78. A 5-hydroxylysine mark is found at K79 and K82. O-linked (Gal...) hydroxylysine glycans are attached at residues K79 and K82. The region spanning 143 to 238 (ALCSELRGTV…SHTAVCEFPA (96 aa)) is the C-type lectin domain. 2 disulfide bridges follow: C145/C234 and C212/C226. Residues D178, E182, E202, N204, D205, E210, D211, N222, and D223 each coordinate Ca(2+). The interval 202 to 210 (EPNDHGSGE) is calcium-dependent carbohydrate binding.

In terms of assembly, homotrimer. Forms higher oligomeric complexes formed by the association of two, three or more homotrimers. Oligomerization occurs in the endoplasmic reticulum. Interacts with MASP1 and MASP2. In terms of processing, hydroxylated on lysine and proline residues within the collagen-like domain. Post-translationally, O-glycosylated. O-linked glycans on hydroxylysine residues consist of Glc-Gal disaccharides bound to the oxygen atom of post-translationally added hydroxyl groups. Detected in blood serum (at protein level).

It is found in the secreted. Calcium-dependent lectin. Plays a role in the innate immune response by binding mannose, fucose and N-acetylglucosamine moieties on different microorganisms and mediating activation of the lectin complement pathway. Binds to late apoptotic cells, as well as to apoptotic blebs and to necrotic cells, but not to early apoptotic cells, facilitating their uptake by macrophages. This is Mannose-binding protein A (Mbl1) from Rattus norvegicus (Rat).